The following is a 396-amino-acid chain: Elongation factor Tu (396 aa).

The region spanning 10–206 is the tr-type G domain; it reads KPHVNVGTIG…ALDNYIPLPE (197 aa). A G1 region spans residues 19–26; that stretch reads GHVDHGKT. Residue 19-26 coordinates GTP; the sequence is GHVDHGKT. T26 serves as a coordination point for Mg(2+). Residues 60-64 form a G2 region; sequence GITIN. Residues 81 to 84 form a G3 region; the sequence is DCPG. Residues 81 to 85 and 136 to 139 each bind GTP; these read DCPGH and NKCD. A G4 region spans residues 136-139; that stretch reads NKCD. The interval 174-176 is G5; the sequence is SAK.

Belongs to the TRAFAC class translation factor GTPase superfamily. Classic translation factor GTPase family. EF-Tu/EF-1A subfamily. Monomer.

Its subcellular location is the cytoplasm. The catalysed reaction is GTP + H2O = GDP + phosphate + H(+). GTP hydrolase that promotes the GTP-dependent binding of aminoacyl-tRNA to the A-site of ribosomes during protein biosynthesis. This is Elongation factor Tu from Polaromonas naphthalenivorans (strain CJ2).